A 144-amino-acid polypeptide reads, in one-letter code: Mediator of RNA polymerase II transcription subunit 21 (144 aa).

It belongs to the Mediator complex subunit 21 family. In terms of assembly, component of the Mediator complex, which is composed of MED1, MED4, MED6, MED7, MED8, MED9, MED10, MED11, MED12, MED13, MED13L, MED14, MED15, MED16, MED17, MED18, MED19, MED20, MED21, MED22, MED23, MED24, MED25, MED26, MED27, MED29, MED30, MED31, CCNC, CDK8 and CDC2L6/CDK11. The MED12, MED13, CCNC and CDK8 subunits form a distinct module termed the CDK8 module. Mediator containing the CDK8 module is less active than Mediator lacking this module in supporting transcriptional activation. Individual preparations of the Mediator complex lacking one or more distinct subunits have been variously termed ARC, CRSP, DRIP, PC2, SMCC and TRAP. Interacts with PPARG. Interacts with THRA in a ligand-dependent fashion.

It localises to the nucleus. In terms of biological role, component of the Mediator complex, a coactivator involved in the regulated transcription of nearly all RNA polymerase II-dependent genes. Mediator functions as a bridge to convey information from gene-specific regulatory proteins to the basal RNA polymerase II transcription machinery. Mediator is recruited to promoters by direct interactions with regulatory proteins and serves as a scaffold for the assembly of a functional preinitiation complex with RNA polymerase II and the general transcription factors. In Bos taurus (Bovine), this protein is Mediator of RNA polymerase II transcription subunit 21 (MED21).